We begin with the raw amino-acid sequence, 336 residues long: UbiA prenyltransferase domain-containing protein 1 (336 aa).

Residues 1 to 22 (MQEMKPAALSGSNGLNGASGSS) are disordered. The span at 7-22 (AALSGSNGLNGASGSS) shows a compositional bias: low complexity. Helical transmembrane passes span 79–99 (LLLLLVCAVAVLLVHGAGNLV), 129–149 (VVMFGAVLYSAGCLCATLLYF), 158–178 (LALIYFGGLSSSFLYTGGIGL), 180–200 (YVALGDVVILITFGPLAVMFA), 201–221 (HAVQVGYLSVLPLVYAVPLAL), 254–274 (LSYVIYNLLLFVPYLLFCILA), and 315–335 (LLMGLFYVFGIILAPQGSLPL).

The protein belongs to the UbiA prenyltransferase family.

It localises to the endoplasmic reticulum membrane. The protein resides in the golgi apparatus membrane. It is found in the mitochondrion membrane. It catalyses the reaction menadiol + (2E,6E,10E)-geranylgeranyl diphosphate = menaquinol-4 + diphosphate. It carries out the reaction all-trans-decaprenyl diphosphate + 4-hydroxybenzoate = 4-hydroxy-3-(all-trans-decaprenyl)benzoate + diphosphate. It participates in quinol/quinone metabolism; menaquinone biosynthesis. It functions in the pathway cofactor biosynthesis; ubiquinone biosynthesis. Functionally, prenyltransferase that mediates the formation of menaquinone-4 (MK-4) and coenzyme Q10. MK-4 is a vitamin K2 isoform required for endothelial cell development. Mediates the conversion of phylloquinone (PK) into MK-4, probably by cleaving the side chain of phylloquinone (PK) to release 2-methyl-1,4-naphthoquinone (menadione; K3) and then prenylating it with geranylgeranyl pyrophosphate (GGPP) to form MK-4. Also plays a role in cardiovascular development independently of MK-4 biosynthesis, by acting as a coenzyme Q10 biosynthetic enzyme: coenzyme Q10, also named ubiquinone, plays an important antioxidant role in the cardiovascular system. Mediates biosynthesis of coenzyme Q10 in the Golgi membrane, leading to protect cardiovascular tissues from nos3/eNOS-dependent oxidative stress. The chain is UbiA prenyltransferase domain-containing protein 1 (ubiad1) from Danio rerio (Zebrafish).